The sequence spans 308 residues: Ribosomal protein L11 methyltransferase (308 aa).

Thr-157, Gly-178, Asp-200, and Asn-243 together coordinate S-adenosyl-L-methionine.

This sequence belongs to the methyltransferase superfamily. PrmA family.

It localises to the cytoplasm. The catalysed reaction is L-lysyl-[protein] + 3 S-adenosyl-L-methionine = N(6),N(6),N(6)-trimethyl-L-lysyl-[protein] + 3 S-adenosyl-L-homocysteine + 3 H(+). Functionally, methylates ribosomal protein L11. This is Ribosomal protein L11 methyltransferase from Pelotomaculum thermopropionicum (strain DSM 13744 / JCM 10971 / SI).